Consider the following 406-residue polypeptide: Tryptophan synthase beta chain (406 aa).

K99 is subject to N6-(pyridoxal phosphate)lysine.

This sequence belongs to the TrpB family. As to quaternary structure, tetramer of two alpha and two beta chains. Pyridoxal 5'-phosphate serves as cofactor.

The enzyme catalyses (1S,2R)-1-C-(indol-3-yl)glycerol 3-phosphate + L-serine = D-glyceraldehyde 3-phosphate + L-tryptophan + H2O. Its pathway is amino-acid biosynthesis; L-tryptophan biosynthesis; L-tryptophan from chorismate: step 5/5. The beta subunit is responsible for the synthesis of L-tryptophan from indole and L-serine. This is Tryptophan synthase beta chain from Brucella canis (strain ATCC 23365 / NCTC 10854 / RM-666).